The primary structure comprises 362 residues: Porin Omp2b (362 aa).

The N-terminal stretch at 1 to 22 (MNIKSLLLGSAAALVAASGAQA) is a signal peptide.

This sequence belongs to the alphaproteobacteria porin family. In terms of assembly, homotrimer.

It localises to the cell outer membrane. Forms passive diffusion pores that allow small molecular weight hydrophilic materials across the outer membrane. The polypeptide is Porin Omp2b (omp2b) (Brucella melitensis biotype 1 (strain ATCC 23456 / CCUG 17765 / NCTC 10094 / 16M)).